The primary structure comprises 338 residues: Putative pectinesterase 63 (338 aa).

An N-terminal signal peptide occupies residues 1 to 24; the sequence is MGYNYVSLIVTILLVVITSPVVFG. 2 residues coordinate substrate: Thr116 and Gln151. Asp174 acts as the Proton donor in catalysis. Residue Asp195 is the Nucleophile of the active site. Substrate is bound at residue Arg252.

It belongs to the pectinesterase family.

Its subcellular location is the secreted. The protein resides in the cell wall. It carries out the reaction [(1-&gt;4)-alpha-D-galacturonosyl methyl ester](n) + n H2O = [(1-&gt;4)-alpha-D-galacturonosyl](n) + n methanol + n H(+). It participates in glycan metabolism; pectin degradation; 2-dehydro-3-deoxy-D-gluconate from pectin: step 1/5. In terms of biological role, acts in the modification of cell walls via demethylesterification of cell wall pectin. The protein is Putative pectinesterase 63 (PME63) of Arabidopsis thaliana (Mouse-ear cress).